Here is a 180-residue protein sequence, read N- to C-terminus: Type IV major pilin protein PilE1 (180 aa).

Residues 1–7 constitute a propeptide that is removed on maturation; it reads MNTLQKG. The residue at position 8 (phenylalanine 8) is an N-methylphenylalanine. The chain crosses the membrane as a helical span at residues 8–28; sequence FTLIELMIVIAIVGILAAVAL. An O-linked (GlcNAc...) serine glycan is attached at serine 70. The cysteines at positions 128 and 160 are disulfide-linked.

It belongs to the N-Me-Phe pilin family. The pili are polar flexible filaments of about 5.4 nanometers diameter and 2.5 micrometers average length; they consist of only a single polypeptide chain arranged in a helical configuration of five subunits per turn in the assembled pilus.

It is found in the fimbrium. The protein localises to the membrane. Major component of the type IV pilus (T4P) that plays a role in cellular adherence, microcolony formation, resistance to neutrophil mediated killing, twitching motility as well as transformation. Mediates the attachment and the formation of bacterial microcolonies on host epithelial cells. Mechanistically, pili retractation induces host NF-kappa-B activation in infected cells, which is temporally associated with the formation of gonococcal microcolonies. The chain is Type IV major pilin protein PilE1 (pilE1) from Neisseria gonorrhoeae.